We begin with the raw amino-acid sequence, 465 residues long: Lactaldehyde dehydrogenase (465 aa).

Gly-220–Gly-225 contributes to the NAD(+) binding site. Residues Glu-240 and Cys-274 contribute to the active site.

It belongs to the aldehyde dehydrogenase family. As to quaternary structure, homotetramer.

The enzyme catalyses (S)-lactaldehyde + NAD(+) + H2O = (S)-lactate + NADH + 2 H(+). The protein operates within cofactor biosynthesis; coenzyme F420 biosynthesis. Its function is as follows. Involved in F420 biosynthesis through the oxidation of lactaldehyde to lactate. The polypeptide is Lactaldehyde dehydrogenase (Methanococcus aeolicus (strain ATCC BAA-1280 / DSM 17508 / OCM 812 / Nankai-3)).